The primary structure comprises 275 residues: Polyamine aminopropyltransferase (275 aa).

Positions 2 to 235 constitute a PABS domain; it reads ELWFTEKQTK…GLWTFTIGSK (234 aa). Position 31 (Q31) interacts with S-methyl-5'-thioadenosine. Spermidine is bound by residues H62 and D86. S-methyl-5'-thioadenosine contacts are provided by residues E106 and 137-138; that span reads DG. Catalysis depends on D155, which acts as the Proton acceptor. 155–158 contributes to the spermidine binding site; that stretch reads DSTE. P162 contributes to the S-methyl-5'-thioadenosine binding site.

Belongs to the spermidine/spermine synthase family. As to quaternary structure, homodimer or homotetramer.

Its subcellular location is the cytoplasm. It carries out the reaction S-adenosyl 3-(methylsulfanyl)propylamine + putrescine = S-methyl-5'-thioadenosine + spermidine + H(+). The protein operates within amine and polyamine biosynthesis; spermidine biosynthesis; spermidine from putrescine: step 1/1. Its function is as follows. Catalyzes the irreversible transfer of a propylamine group from the amino donor S-adenosylmethioninamine (decarboxy-AdoMet) to putrescine (1,4-diaminobutane) to yield spermidine. The protein is Polyamine aminopropyltransferase of Bacillus cereus (strain ATCC 10987 / NRS 248).